The chain runs to 180 residues: Outer-membrane lipoprotein LolB (180 aa).

The N-terminal stretch at 1–16 (MIRRVLLLSLALLLAG) is a signal peptide. Cys17 carries N-palmitoyl cysteine lipidation. A lipid anchor (S-diacylglycerol cysteine) is attached at Cys17.

The protein belongs to the LolB family. Monomer.

The protein localises to the cell outer membrane. Functionally, plays a critical role in the incorporation of lipoproteins in the outer membrane after they are released by the LolA protein. This is Outer-membrane lipoprotein LolB from Chromobacterium violaceum (strain ATCC 12472 / DSM 30191 / JCM 1249 / CCUG 213 / NBRC 12614 / NCIMB 9131 / NCTC 9757 / MK).